A 123-amino-acid polypeptide reads, in one-letter code: Fluoride-specific ion channel FluC 1 (123 aa).

A run of 3 helical transmembrane segments spans residues 33 to 53 (TFLI…LFGV), 59 to 79 (YGTM…TTFS), and 98 to 118 (VFYL…GAML). The Na(+) site is built by glycine 73 and threonine 76.

Belongs to the fluoride channel Fluc/FEX (TC 1.A.43) family.

The protein resides in the cell inner membrane. It catalyses the reaction fluoride(in) = fluoride(out). Na(+) is not transported, but it plays an essential structural role and its presence is essential for fluoride channel function. Functionally, fluoride-specific ion channel. Important for reducing fluoride concentration in the cell, thus reducing its toxicity. In Brucella melitensis biotype 1 (strain ATCC 23456 / CCUG 17765 / NCTC 10094 / 16M), this protein is Fluoride-specific ion channel FluC 1.